An 860-amino-acid polypeptide reads, in one-letter code: Nuclear pore complex protein NUP93B (860 aa).

Belongs to the nucleoporin interacting component (NIC) family. Part of the nuclear pore complex (NPC). The NPC has an eight-fold symmetrical structure comprising a central transport channel and two rings, the cytoplasmic and nuclear rings, to which eight filaments are attached. The cytoplasmic filaments have loose ends, while the nuclear filaments are joined in a distal ring, forming a nuclear basket. NPCs are highly dynamic in configuration and composition, and can be devided in 3 subcomplexes, the NUP62 subcomplex, the NUP107-160 subcomplex and the NUP93 subcomplex, containing approximately 30 different nucleoporin proteins.

Its subcellular location is the nucleus envelope. It is found in the nucleus. The protein resides in the nuclear pore complex. This chain is Nuclear pore complex protein NUP93B, found in Arabidopsis thaliana (Mouse-ear cress).